We begin with the raw amino-acid sequence, 211 residues long: Probable nicotinate-nucleotide adenylyltransferase (211 aa).

The protein belongs to the NadD family.

It catalyses the reaction nicotinate beta-D-ribonucleotide + ATP + H(+) = deamido-NAD(+) + diphosphate. It participates in cofactor biosynthesis; NAD(+) biosynthesis; deamido-NAD(+) from nicotinate D-ribonucleotide: step 1/1. Its function is as follows. Catalyzes the reversible adenylation of nicotinate mononucleotide (NaMN) to nicotinic acid adenine dinucleotide (NaAD). This is Probable nicotinate-nucleotide adenylyltransferase from Legionella pneumophila (strain Paris).